We begin with the raw amino-acid sequence, 119 residues long: MICOS complex subunit MIC13 (119 aa).

Topologically, residues 1-7 (MVARVWS) are mitochondrial matrix. The chain crosses the membrane as a helical span at residues 8-26 (LMRFLIKGSVAGGAVYLVY). Topologically, residues 27–119 (DQELLGPSDK…GWEYLKEHSK (93 aa)) are mitochondrial intermembrane.

The protein belongs to the MICOS complex subunit Mic13 family. Component of the mitochondrial contact site and cristae organizing system (MICOS) complex, composed of at least MICOS10/MIC10, CHCHD3/MIC19, CHCHD6/MIC25, APOO/MIC26, MICOS13/MIC13, APOOL/MIC27 and IMMT/MIC60. The MICOS complex associates with mitochondrial outer membrane proteins SAMM50, MTX1 and MTX2 (together described as components of the mitochondrial outer membrane sorting assembly machinery (SAM) complex) and DNAJC11, mitochondrial inner membrane protein TMEM11 and with HSPA9. The MICOS and SAM complexes together with DNAJC11 are part of a large protein complex spanning both membranes termed the mitochondrial intermembrane space bridging (MIB) complex.

The protein localises to the mitochondrion inner membrane. Functionally, component of the MICOS complex, a large protein complex of the mitochondrial inner membrane that plays crucial roles in the maintenance of crista junctions, inner membrane architecture, and formation of contact sites to the outer membrane. Constituent of mature MICOS complex, it is required for the formation of cristae junction (CJ) and maintenance of cristae morphology. Required for the incorporation of MICOS10/MIC10 into the MICOS complex. The protein is MICOS complex subunit MIC13 (Micos13) of Mus musculus (Mouse).